A 432-amino-acid polypeptide reads, in one-letter code: Adenylosuccinate synthetase (432 aa).

GTP is bound by residues 13-19 (GDEGKGK) and 41-43 (GHT). The active-site Proton acceptor is D14. Mg(2+) is bound by residues D14 and G41. Residues 14-17 (DEGK), 39-42 (NAGH), T130, R144, Q225, T240, and R304 contribute to the IMP site. The active-site Proton donor is the H42. A substrate-binding site is contributed by 300-306 (ATTGRKR). GTP contacts are provided by residues R306, 332–334 (KLD), and 414–416 (STG).

Belongs to the adenylosuccinate synthetase family. Homodimer. Requires Mg(2+) as cofactor.

It localises to the cytoplasm. It carries out the reaction IMP + L-aspartate + GTP = N(6)-(1,2-dicarboxyethyl)-AMP + GDP + phosphate + 2 H(+). Its pathway is purine metabolism; AMP biosynthesis via de novo pathway; AMP from IMP: step 1/2. Functionally, plays an important role in the de novo pathway of purine nucleotide biosynthesis. Catalyzes the first committed step in the biosynthesis of AMP from IMP. In Alkalilimnicola ehrlichii (strain ATCC BAA-1101 / DSM 17681 / MLHE-1), this protein is Adenylosuccinate synthetase.